A 560-amino-acid polypeptide reads, in one-letter code: NRAMP-like transporter smf-3 (560 aa).

Over 1-43 the chain is Cytoplasmic; the sequence is MEGEMKCPIEEIREKPEMRKAQQTYEVQVEVEDTPDTTFSWRK. Residues 44–64 traverse the membrane as a helical segment; it reads LWAFTGPGFLMSIAYLDPGNI. Over 65–71 the chain is Extracellular; the sequence is ESDLQAG. The chain crosses the membrane as a helical span at residues 72 to 92; sequence AISYFKLIWVLLVAHIMGLLL. Topologically, residues 93 to 120 are cytoplasmic; that stretch reads QRLAARLGVVSGKHMAEIAFSYYPKIPR. Residues 121 to 141 traverse the membrane as a helical segment; it reads LVLWMLVESAIVGSDMQEVIG. The Extracellular portion of the chain corresponds to 142-152; that stretch reads TAISFYLLSNG. The helical transmembrane segment at 153-173 threads the bilayer; sequence VIPLWAGVLITICDTFTFLFL. At 174 to 182 the chain is on the cytoplasmic side; that stretch reads EKYGVRKFE. The chain crosses the membrane as a helical span at residues 183-203; sequence AFFCFLITCMAITFGYEFGVS. At 204 to 229 the chain is on the extracellular side; that stretch reads APDAGKMFSGMFVPWCNGCDNNMVMQ. A helical transmembrane segment spans residues 230-250; it reads GVAIIGAVIMPHNFYLHSALV. Over 251-268 the chain is Cytoplasmic; sequence KSRRVDRRRAEKVTEANK. A helical membrane pass occupies residues 269-289; it reads YFFIESAFALFVSFIINTLVI. Residues 290 to 339 are Extracellular-facing; it reads SVFAQGMYGKTNQDIRDTCYNNTHNGMPDFYKVEFPANNDAAQSDIYHAG. A glycan (N-linked (GlcNAc...) asparagine) is linked at Asn310. The chain crosses the membrane as a helical span at residues 340–360; the sequence is IFLGCTFGIFALYVWAVGILA. The Cytoplasmic segment spans residues 361–390; that stretch reads AGQSSTMTGTYAGQFAMEGFIQIKLPQWKR. A helical membrane pass occupies residues 391 to 411; the sequence is ILITRSLAILPTLAVVIFSGG. Residues 412–420 are Extracellular-facing; that stretch reads IDNISSLND. Asn414 is a glycosylation site (N-linked (GlcNAc...) asparagine). The helical transmembrane segment at 421-441 threads the bilayer; it reads FLNCLQLIQLPFALIPVLTFV. Over 442–458 the chain is Cytoplasmic; that stretch reads SDRNIMHEYKLASVSKV. The helical transmembrane segment at 459–479 threads the bilayer; that stretch reads VSIVISLIILFINFYFLYSWI. Residues 480-486 lie on the Extracellular side of the membrane; sequence GSTFGYN. The helical transmembrane segment at 487-507 threads the bilayer; the sequence is AVSIPITIFCAIFYIIFIAYL. Over 508–560 the chain is Cytoplasmic; sequence TYYCLVAMEFISPIQTKWLAEPIYHDFDAPWLEDSENPSTKNTISDDELSMRY.

Belongs to the NRAMP family. As to expression, expressed in dopaminergic neurons (at protein level). Expressed in intestine with a weaker expression in the most proximal and distal regions. Weakly expressed in the hyp1-6, hyp7 and hyp8-12 hypodermis and in head and tail neurons.

The protein localises to the apical cell membrane. It is found in the cytoplasmic vesicle membrane. In terms of biological role, probable divalent metal ion transporter which regulates the uptake of several heavy metals such as Mn(2+), Al(3+) and iron. Plays a role in modulating Al(3+)-induced dopamine (DA) neuron degeneration through the intracellular sequestration of Al(3+). This chain is NRAMP-like transporter smf-3, found in Caenorhabditis elegans.